The sequence spans 590 residues: Aspartate--tRNA(Asp/Asn) ligase (590 aa).

Glu175 provides a ligand contact to L-aspartate. Positions 199-202 (QQYK) are aspartate. L-aspartate contacts are provided by Arg221 and His450. Position 221–223 (221–223 (RDE)) interacts with ATP. Glu484 is an ATP binding site. Arg491 serves as a coordination point for L-aspartate. An ATP-binding site is contributed by 536-539 (GIDR).

The protein belongs to the class-II aminoacyl-tRNA synthetase family. Type 1 subfamily. As to quaternary structure, homodimer.

It is found in the cytoplasm. The catalysed reaction is tRNA(Asx) + L-aspartate + ATP = L-aspartyl-tRNA(Asx) + AMP + diphosphate. Functionally, aspartyl-tRNA synthetase with relaxed tRNA specificity since it is able to aspartylate not only its cognate tRNA(Asp) but also tRNA(Asn). Reaction proceeds in two steps: L-aspartate is first activated by ATP to form Asp-AMP and then transferred to the acceptor end of tRNA(Asp/Asn). The polypeptide is Aspartate--tRNA(Asp/Asn) ligase (Azorhizobium caulinodans (strain ATCC 43989 / DSM 5975 / JCM 20966 / LMG 6465 / NBRC 14845 / NCIMB 13405 / ORS 571)).